Reading from the N-terminus, the 282-residue chain is Ribosomal RNA small subunit methyltransferase A (282 aa).

Positions 1 to 21 (MPDFPKEHATPMSNRPPAHQA) are disordered. Residues Asn28, Leu30, Gly55, Glu76, Asp101, and Asn126 each coordinate S-adenosyl-L-methionine.

It belongs to the class I-like SAM-binding methyltransferase superfamily. rRNA adenine N(6)-methyltransferase family. RsmA subfamily.

The protein localises to the cytoplasm. It carries out the reaction adenosine(1518)/adenosine(1519) in 16S rRNA + 4 S-adenosyl-L-methionine = N(6)-dimethyladenosine(1518)/N(6)-dimethyladenosine(1519) in 16S rRNA + 4 S-adenosyl-L-homocysteine + 4 H(+). Specifically dimethylates two adjacent adenosines (A1518 and A1519) in the loop of a conserved hairpin near the 3'-end of 16S rRNA in the 30S particle. May play a critical role in biogenesis of 30S subunits. This is Ribosomal RNA small subunit methyltransferase A from Chromohalobacter salexigens (strain ATCC BAA-138 / DSM 3043 / CIP 106854 / NCIMB 13768 / 1H11).